The primary structure comprises 270 residues: DNA adenine methylase (270 aa).

Residues tryptophan 10, lysine 14, aspartate 54, and aspartate 181 each coordinate S-adenosyl-L-methionine.

The protein belongs to the N(4)/N(6)-methyltransferase family.

It catalyses the reaction a 2'-deoxyadenosine in DNA + S-adenosyl-L-methionine = an N(6)-methyl-2'-deoxyadenosine in DNA + S-adenosyl-L-homocysteine + H(+). In terms of biological role, an alpha subtype methylase, recognizes the double-stranded sequence 5'-GATC-3' and methylates A-2. Overexpression leads to hypermutability. May be involved in methyl-directed DNA mismatch repair, initiation of chromosome replication and gene expression. This chain is DNA adenine methylase, found in Serratia marcescens.